The following is an 804-amino-acid chain: Enhancer of polycomb homolog 2 (804 aa).

Disordered stretches follow at residues 372-398 (QSSD…PDGS), 484-507 (GFSS…SDRH), 602-623 (QQSQ…KSDC), and 642-669 (NSPT…VQPS). Residues 602–611 (QQSQQSLQQS) show a composition bias toward low complexity. Over residues 654-669 (DQNAGHSNLNGVVQPS) the composition is skewed to polar residues.

This sequence belongs to the enhancer of polycomb family.

Its subcellular location is the nucleus. Functionally, may play a role in transcription or DNA repair. The sequence is that of Enhancer of polycomb homolog 2 (epc2) from Xenopus tropicalis (Western clawed frog).